We begin with the raw amino-acid sequence, 138 residues long: MSDGLVPGEVIPGEGTVTLNEGRERTEVTVGNTGDRPSQVGSHFHFFEANAALEFDREAAMGMRLNIPAGTAVRFEPGDEQTVELVEIGGKRRAHGMNGLVNGSVDGETGDAVERMRAAGFGDTGEAAPDDGDTESDQ.

The disordered stretch occupies residues 115-138 (RMRAAGFGDTGEAAPDDGDTESDQ). Residues 128–138 (APDDGDTESDQ) show a composition bias toward acidic residues.

The protein belongs to the urease beta subunit family. Heterotrimer of UreA (gamma), UreB (beta) and UreC (alpha) subunits. Three heterotrimers associate to form the active enzyme.

The protein resides in the cytoplasm. The catalysed reaction is urea + 2 H2O + H(+) = hydrogencarbonate + 2 NH4(+). The protein operates within nitrogen metabolism; urea degradation; CO(2) and NH(3) from urea (urease route): step 1/1. In Haloarcula marismortui (strain ATCC 43049 / DSM 3752 / JCM 8966 / VKM B-1809) (Halobacterium marismortui), this protein is Urease subunit beta.